A 219-amino-acid polypeptide reads, in one-letter code: RING finger protein nenya (219 aa).

Residues 6–48 (CNKCFRRRNVEPTLIFHMTQCQHVLCASCLSESSTDKKCPLCK) form an RING-type zinc finger. The interval 161–181 (NQARGLRPRTPSVTTSDNTQS) is disordered.

As to quaternary structure, may interact with itself, with narya and vilya through its RING-type zinc finger.

In terms of biological role, required for the formation of DNA double-strand breaks together with narya and vilya during the meiotic recombination process. Plays a redundant role with narya in chromosome segregation during female meiosis. The chain is RING finger protein nenya from Drosophila melanogaster (Fruit fly).